The chain runs to 729 residues: Catalase-peroxidase (729 aa).

A disordered region spans residues 1–20; that stretch reads MHNGSNGSVEQRDSMPETSR. Over residues 10–20 the composition is skewed to basic and acidic residues; that stretch reads EQRDSMPETSR. The segment at residues 91–214 is a cross-link (tryptophyl-tyrosyl-methioninium (Trp-Tyr) (with M-240)); it reads WHAAGTYRTT…LGATVMGLIY (124 aa). Residue His92 is the Proton acceptor of the active site. The segment at residues 214–240 is a cross-link (tryptophyl-tyrosyl-methioninium (Tyr-Met) (with W-91)); it reads YVNPEGPESTPDPEWSAQRIRKSFGRM. His255 serves as a coordination point for heme b.

This sequence belongs to the peroxidase family. Peroxidase/catalase subfamily. As to quaternary structure, homodimer or homotetramer. Requires heme b as cofactor. Post-translationally, formation of the three residue Trp-Tyr-Met cross-link is important for the catalase, but not the peroxidase activity of the enzyme.

It carries out the reaction H2O2 + AH2 = A + 2 H2O. It catalyses the reaction 2 H2O2 = O2 + 2 H2O. Bifunctional enzyme with both catalase and broad-spectrum peroxidase activity. This chain is Catalase-peroxidase, found in Salinibacter ruber (strain DSM 13855 / M31).